The chain runs to 365 residues: 3-dehydroquinate synthase (365 aa).

Residues 107–111 (GVIGD), 131–132 (TT), Lys-144, and Lys-153 each bind NAD(+). Residues Glu-186, His-251, and His-268 each coordinate Zn(2+).

It belongs to the sugar phosphate cyclases superfamily. Dehydroquinate synthase family. The cofactor is Co(2+). Zn(2+) serves as cofactor. Requires NAD(+) as cofactor.

The protein localises to the cytoplasm. The enzyme catalyses 7-phospho-2-dehydro-3-deoxy-D-arabino-heptonate = 3-dehydroquinate + phosphate. Its pathway is metabolic intermediate biosynthesis; chorismate biosynthesis; chorismate from D-erythrose 4-phosphate and phosphoenolpyruvate: step 2/7. In terms of biological role, catalyzes the conversion of 3-deoxy-D-arabino-heptulosonate 7-phosphate (DAHP) to dehydroquinate (DHQ). This chain is 3-dehydroquinate synthase, found in Picosynechococcus sp. (strain ATCC 27264 / PCC 7002 / PR-6) (Agmenellum quadruplicatum).